The primary structure comprises 204 residues: Thioredoxin-like 4, chloroplastic (204 aa).

A chloroplast-targeting transit peptide spans 1–27; the sequence is MSSLLNISHCSYHGYSGLTSRGGINTV. In terms of domain architecture, Thioredoxin spans 63-201; it reads AKSLSQENLV…IDAAILKYTS (139 aa). Active-site nucleophile residues include Cys-119 and Cys-122. Cys-119 and Cys-122 are joined by a disulfide.

Belongs to the thioredoxin family.

The protein localises to the plastid. The protein resides in the chloroplast. Its function is as follows. Probable thiol-disulfide oxidoreductase that may participate in various redox reactions. The sequence is that of Thioredoxin-like 4, chloroplastic from Arabidopsis thaliana (Mouse-ear cress).